The following is a 127-amino-acid chain: ALK and LTK ligand 1 (127 aa).

A signal peptide spans 1–27; the sequence is MWLTKPSTPVSALLLLALALSPPGTQG. Disulfide bonds link C88/C124 and C102/C111.

The protein belongs to the ALKAL family.

The protein localises to the secreted. It localises to the cell membrane. Functionally, cytokine that acts as a physiological ligand for receptor tyrosine kinase LTK, leading to its activation. Monomeric ALKAL1 binds to LTK, leading to LTK homodimerization and activation. In contrast to ALKAL2, does not act as a potent physiological ligand for ALK. The chain is ALK and LTK ligand 1 from Mus musculus (Mouse).